Reading from the N-terminus, the 280-residue chain is Vitamin B12-binding protein (280 aa).

Residues 1–27 (MMPLGLFPLPRAAAVLLISLLTLPAQA) form the signal peptide. The Fe/B12 periplasmic-binding domain occupies 30–277 (RVISLSPSTT…QMASIPTPVA (248 aa)). Residue Y57 participates in cyanocob(III)alamin binding. The cysteines at positions 190 and 266 are disulfide-linked.

It belongs to the BtuF family. As to quaternary structure, the complex is composed of two ATP-binding proteins (BtuD), two transmembrane proteins (BtuC) and a solute-binding protein (BtuF).

It localises to the periplasm. In terms of biological role, part of the ABC transporter complex BtuCDF involved in vitamin B12 import. Binds vitamin B12 and delivers it to the periplasmic surface of BtuC. The chain is Vitamin B12-binding protein from Yersinia pseudotuberculosis serotype O:3 (strain YPIII).